Consider the following 90-residue polypeptide: Protein A54 (90 aa).

The sequence is that of Protein A54 from Homo sapiens (Human).